An 840-amino-acid chain; its full sequence is MKLFNKEEASFETLLKRLLVVCESHSRYHGSSLDPMVKVGHEMRKISGYLRCILRKHAANHDGMSLTQSIVNSYKSLFKDAQILDLYHNLLFGCMHLLLDANMSYFRMDSQKLFAVLLFKVYYKLRDIFYVTNEVRLGSLISAFVYKFKSCYDFISCNSLKYGSVRDVISGEVSLINLPPIDSNKVINRAYYRLDVKKLAINNKLVEILELDNGEIAIFEVLSEKMPYTLQTIDNLFQSLALGNHDLMNVGRSLLFRPFRSGDLDLIRLDDSGAKLKVPINNSIVLRLTCKDPIQWQEYWKHVIRKLFDSTATKEYKRSGSKISQQVYVRSNKPDYTSPKRNDDMPISSVKISDTIHNGRTLHRSIPLPGSLSSLIETSNEYPDEESLSIMSERATVSEDSDLDTSLKDIESLSCEKLIELDKSIQVPLSPKYMDTPTLKNIRTASQTFSLESVSPELIESVASEIDDSESIISEDGKDKRDKDLFDPDIDFYKPTLYRRKSSSLLSIFSKNKKNLTIDIPKNHSRSLFSLPGNQQSVTPISASPHDDNVDETYVSFPLSINTSGGAVYFENNSVKVSLWNGKSWVPLSKDMLCLSLILSGDNETLLIIYKDFEREKCKLVVKLEPTWKYNRSTAQDVQLRIPSSDFKASVFGTLHDLTLSIRCAQAAKLVNVLQYQLQSSQTSSLSPSTTTGTLSTVSSSSCFSRNVTRSSTENSELANMKDSSEYISSSLLLSSVKVRQHVKTKADVWKPSRVGYTDIFSQEYKGIVVAIKFVICSDAEGTLYPREYNSRLHDIKRLGRTGLSFTDKKEAYLLEFKNQDVVDHVHKLILPFNTSWQSS.

The protein belongs to the UPF0508 family.

In Saccharomyces cerevisiae (strain YJM789) (Baker's yeast), this protein is UPF0508 protein SCY_2952.